The primary structure comprises 407 residues: Phosphopentomutase (407 aa).

Residues Asp10, Asp306, His311, Asp347, His348, and His359 each coordinate Mn(2+).

This sequence belongs to the phosphopentomutase family. It depends on Mn(2+) as a cofactor.

Its subcellular location is the cytoplasm. It catalyses the reaction 2-deoxy-alpha-D-ribose 1-phosphate = 2-deoxy-D-ribose 5-phosphate. It carries out the reaction alpha-D-ribose 1-phosphate = D-ribose 5-phosphate. The protein operates within carbohydrate degradation; 2-deoxy-D-ribose 1-phosphate degradation; D-glyceraldehyde 3-phosphate and acetaldehyde from 2-deoxy-alpha-D-ribose 1-phosphate: step 1/2. Its function is as follows. Isomerase that catalyzes the conversion of deoxy-ribose 1-phosphate (dRib-1-P) and ribose 1-phosphate (Rib-1-P) to deoxy-ribose 5-phosphate (dRib-5-P) and ribose 5-phosphate (Rib-5-P), respectively. This chain is Phosphopentomutase, found in Salmonella dublin (strain CT_02021853).